The sequence spans 235 residues: Sugar fermentation stimulation protein homolog (235 aa).

Belongs to the SfsA family.

This is Sugar fermentation stimulation protein homolog from Allorhizobium ampelinum (strain ATCC BAA-846 / DSM 112012 / S4) (Agrobacterium vitis (strain S4)).